Consider the following 349-residue polypeptide: tRNA pseudouridine synthase D (349 aa).

Residue F27 coordinates substrate. D80 functions as the Nucleophile in the catalytic mechanism. N129 is a binding site for substrate. One can recognise a TRUD domain in the interval 155–303 (GVPNYFGAQR…VEASRRAMLL (149 aa)). F329 lines the substrate pocket.

Belongs to the pseudouridine synthase TruD family.

It carries out the reaction uridine(13) in tRNA = pseudouridine(13) in tRNA. In terms of biological role, responsible for synthesis of pseudouridine from uracil-13 in transfer RNAs. The polypeptide is tRNA pseudouridine synthase D (Salmonella newport (strain SL254)).